A 494-amino-acid polypeptide reads, in one-letter code: Probable cytochrome P450 515A1 (494 aa).

The chain crosses the membrane as a helical span at residues Met1–Phe21. Cys440 lines the heme pocket.

The protein belongs to the cytochrome P450 family. The cofactor is heme.

Its subcellular location is the membrane. This is Probable cytochrome P450 515A1 (cyp515A1) from Dictyostelium discoideum (Social amoeba).